The sequence spans 516 residues: UvrABC system protein C (516 aa).

In terms of domain architecture, GIY-YIG spans 9–87; it reads HLPGCYLFKD…IKKHWPRYNI (79 aa). Positions 191–226 constitute a UVR domain; the sequence is GELIESMEKEMKKMAAKQMFEQAMALRDEISALEYL.

This sequence belongs to the UvrC family. Interacts with UvrB in an incision complex.

It localises to the cytoplasm. The UvrABC repair system catalyzes the recognition and processing of DNA lesions. UvrC both incises the 5' and 3' sides of the lesion. The N-terminal half is responsible for the 3' incision and the C-terminal half is responsible for the 5' incision. The sequence is that of UvrABC system protein C from Methanosarcina acetivorans (strain ATCC 35395 / DSM 2834 / JCM 12185 / C2A).